Here is a 280-residue protein sequence, read N- to C-terminus: Ribosomal RNA small subunit methyltransferase A (280 aa).

His-15, Leu-17, Gly-42, Glu-64, Asp-89, and Asn-109 together coordinate S-adenosyl-L-methionine.

This sequence belongs to the class I-like SAM-binding methyltransferase superfamily. rRNA adenine N(6)-methyltransferase family. RsmA subfamily.

Its subcellular location is the cytoplasm. It carries out the reaction adenosine(1518)/adenosine(1519) in 16S rRNA + 4 S-adenosyl-L-methionine = N(6)-dimethyladenosine(1518)/N(6)-dimethyladenosine(1519) in 16S rRNA + 4 S-adenosyl-L-homocysteine + 4 H(+). Its function is as follows. Specifically dimethylates two adjacent adenosines (A1518 and A1519) in the loop of a conserved hairpin near the 3'-end of 16S rRNA in the 30S particle. May play a critical role in biogenesis of 30S subunits. In Prochlorococcus marinus (strain MIT 9303), this protein is Ribosomal RNA small subunit methyltransferase A.